Reading from the N-terminus, the 533-residue chain is Laccase-2 (533 aa).

The signal sequence occupies residues 1–23 (MFPGARILATLTLALHLLHGAHA). 3 consecutive Plastocyanin-like domains span residues 25–171 (IGPA…LSLY), 173–336 (IDNA…LETN), and 382–501 (TAPV…FAED). Cu cation-binding residues include H98, H100, H143, and H145. 2 disulfide bridges follow: C119–C516 and C151–C238. Cu cation contacts are provided by H427, H430, and H432. Residue N467 is glycosylated (N-linked (GlcNAc...) (high mannose) asparagine). Residues H483, C484, H485, and H489 each contribute to the Cu cation site.

The protein belongs to the multicopper oxidase family. Requires Cu cation as cofactor. In terms of processing, N-glycosylated at Asn-467; contains a high-mannose glycan with a varying number of mannose residues.

The protein resides in the secreted. The catalysed reaction is 4 hydroquinone + O2 = 4 benzosemiquinone + 2 H2O. Functionally, lignin degradation and detoxification of lignin-derived products. The chain is Laccase-2 (POX2) from Pleurotus ostreatus (Oyster mushroom).